The sequence spans 436 residues: Trigger factor (436 aa).

A PPIase FKBP-type domain is found at glutamate 161–proline 246.

The protein belongs to the FKBP-type PPIase family. Tig subfamily.

The protein resides in the cytoplasm. It catalyses the reaction [protein]-peptidylproline (omega=180) = [protein]-peptidylproline (omega=0). In terms of biological role, involved in protein export. Acts as a chaperone by maintaining the newly synthesized protein in an open conformation. Functions as a peptidyl-prolyl cis-trans isomerase. This is Trigger factor from Pseudomonas syringae pv. syringae (strain B728a).